The chain runs to 314 residues: Methenyltetrahydromethanopterin cyclohydrolase (314 aa).

It belongs to the MCH family.

Its subcellular location is the cytoplasm. The enzyme catalyses 5,10-methenyl-5,6,7,8-tetrahydromethanopterin + H2O = N(5)-formyl-5,6,7,8-tetrahydromethanopterin + H(+). Its pathway is one-carbon metabolism; methanogenesis from CO(2); 5,10-methenyl-5,6,7,8-tetrahydromethanopterin from CO(2): step 3/3. Its function is as follows. Catalyzes the reversible interconversion of 5-formyl-H(4)MPT to methenyl-H(4)MPT(+). This is Methenyltetrahydromethanopterin cyclohydrolase from Methanoregula boonei (strain DSM 21154 / JCM 14090 / 6A8).